The following is a 209-amino-acid chain: Uracil phosphoribosyltransferase (209 aa).

5-phospho-alpha-D-ribose 1-diphosphate-binding positions include arginine 79, arginine 104, and 131 to 139 (DPMLATGNS). Uracil-binding positions include isoleucine 194 and 199-201 (GDA). Aspartate 200 provides a ligand contact to 5-phospho-alpha-D-ribose 1-diphosphate.

It belongs to the UPRTase family. Requires Mg(2+) as cofactor.

It carries out the reaction UMP + diphosphate = 5-phospho-alpha-D-ribose 1-diphosphate + uracil. The protein operates within pyrimidine metabolism; UMP biosynthesis via salvage pathway; UMP from uracil: step 1/1. Allosterically activated by GTP. Functionally, catalyzes the conversion of uracil and 5-phospho-alpha-D-ribose 1-diphosphate (PRPP) to UMP and diphosphate. In Polaromonas naphthalenivorans (strain CJ2), this protein is Uracil phosphoribosyltransferase.